The chain runs to 230 residues: DNA mismatch repair protein MutH (230 aa).

Belongs to the MutH family.

Its subcellular location is the cytoplasm. Sequence-specific endonuclease that cleaves unmethylated GATC sequences. It is involved in DNA mismatch repair. The sequence is that of DNA mismatch repair protein MutH from Enterobacter sp. (strain 638).